Reading from the N-terminus, the 146-residue chain is uncharacterized protein (146 aa).

The region spanning methionine 1 to glutamate 137 is the HTH marR-type domain.

This is an uncharacterized protein from Staphylococcus aureus (strain MRSA252).